The primary structure comprises 421 residues: ATP-dependent RNA helicase RhlB (421 aa).

The short motif at 9 to 37 is the Q motif element; it reads QKFSDFALHPVVVQALEKKGFYNCTPIQA. A Helicase ATP-binding domain is found at 40–219; the sequence is LPLTLAGRDV…FEQMNNAEYV (180 aa). 53 to 60 provides a ligand contact to ATP; that stretch reads AQTGTGKT. Residues 165–168 carry the DEAD box motif; sequence DEAD. One can recognise a Helicase C-terminal domain in the interval 245–390; that stretch reads RLLQTLIEEE…VSKYNPDALL (146 aa). The tract at residues 390 to 421 is disordered; it reads LSELPPPKRLSRPRTGNGPRRSGAPRNRRRTG. The segment covering 405 to 414 has biased composition (low complexity); sequence GNGPRRSGAP.

The protein belongs to the DEAD box helicase family. RhlB subfamily. In terms of assembly, component of the RNA degradosome, which is a multiprotein complex involved in RNA processing and mRNA degradation.

It is found in the cytoplasm. It carries out the reaction ATP + H2O = ADP + phosphate + H(+). In terms of biological role, DEAD-box RNA helicase involved in RNA degradation. Has RNA-dependent ATPase activity and unwinds double-stranded RNA. The chain is ATP-dependent RNA helicase RhlB from Cronobacter sakazakii (strain ATCC BAA-894) (Enterobacter sakazakii).